The sequence spans 316 residues: Transaldolase (316 aa).

The active-site Schiff-base intermediate with substrate is the Lys132.

Belongs to the transaldolase family. Type 1 subfamily. In terms of assembly, homodimer.

It localises to the cytoplasm. The catalysed reaction is D-sedoheptulose 7-phosphate + D-glyceraldehyde 3-phosphate = D-erythrose 4-phosphate + beta-D-fructose 6-phosphate. The protein operates within carbohydrate degradation; pentose phosphate pathway; D-glyceraldehyde 3-phosphate and beta-D-fructose 6-phosphate from D-ribose 5-phosphate and D-xylulose 5-phosphate (non-oxidative stage): step 2/3. Functionally, transaldolase is important for the balance of metabolites in the pentose-phosphate pathway. This is Transaldolase from Vibrio campbellii (strain ATCC BAA-1116).